Consider the following 228-residue polypeptide: UPF0173 metal-dependent hydrolase BcerKBAB4_4442 (228 aa).

This sequence belongs to the UPF0173 family.

The sequence is that of UPF0173 metal-dependent hydrolase BcerKBAB4_4442 from Bacillus mycoides (strain KBAB4) (Bacillus weihenstephanensis).